Reading from the N-terminus, the 276-residue chain is Undecaprenyl-diphosphatase (276 aa).

8 helical membrane-spanning segments follow: residues 1 to 21, 39 to 59, 84 to 104, 115 to 135, 159 to 179, 190 to 210, 222 to 242, and 253 to 273; these read MSWL…FLPV, AGAS…LVYF, YRLG…GLLL, LWAI…AEYF, LALL…LFLG, FLLA…DAFA, QLLV…AWFL, and FVGY…TGVV.

The protein belongs to the UppP family.

It is found in the cell membrane. The enzyme catalyses di-trans,octa-cis-undecaprenyl diphosphate + H2O = di-trans,octa-cis-undecaprenyl phosphate + phosphate + H(+). Catalyzes the dephosphorylation of undecaprenyl diphosphate (UPP). Confers resistance to bacitracin. The sequence is that of Undecaprenyl-diphosphatase from Mycobacterium sp. (strain KMS).